Reading from the N-terminus, the 106-residue chain is CRISPR-associated endoribonuclease Cas2 (106 aa).

Mg(2+) is bound at residue D22.

The protein belongs to the CRISPR-associated endoribonuclease Cas2 protein family. Homodimer, forms a heterotetramer with a Cas1 homodimer. It depends on Mg(2+) as a cofactor.

CRISPR (clustered regularly interspaced short palindromic repeat), is an adaptive immune system that provides protection against mobile genetic elements (viruses, transposable elements and conjugative plasmids). CRISPR clusters contain sequences complementary to antecedent mobile elements and target invading nucleic acids. CRISPR clusters are transcribed and processed into CRISPR RNA (crRNA). Functions as a ssRNA-specific endoribonuclease. Involved in the integration of spacer DNA into the CRISPR cassette. The polypeptide is CRISPR-associated endoribonuclease Cas2 (Fusobacterium nucleatum subsp. nucleatum (strain ATCC 25586 / DSM 15643 / BCRC 10681 / CIP 101130 / JCM 8532 / KCTC 2640 / LMG 13131 / VPI 4355)).